An 81-amino-acid chain; its full sequence is Penaeidin-3j (81 aa).

An N-terminal signal peptide occupies residues 1–19 (MRLVVCLVFLASFALVCQG). Glutamine 20 bears the Pyrrolidone carboxylic acid mark. Intrachain disulfides connect cysteine 50–cysteine 65, cysteine 54–cysteine 72, and cysteine 66–cysteine 73. Serine 80 bears the Serine amide mark.

This sequence belongs to the penaeidin family.

Its subcellular location is the cytoplasmic granule. In terms of biological role, antibacterial and antifungal activity. Presents chitin-binding activity. The chain is Penaeidin-3j from Penaeus vannamei (Whiteleg shrimp).